Here is a 127-residue protein sequence, read N- to C-terminus: Translation initiation factor 5A (127 aa).

The residue at position 35 (Lys35) is a Hypusine.

It belongs to the eIF-5A family.

It is found in the cytoplasm. Functionally, functions by promoting the formation of the first peptide bond. The sequence is that of Translation initiation factor 5A from Methanococcoides burtonii (strain DSM 6242 / NBRC 107633 / OCM 468 / ACE-M).